Consider the following 185-residue polypeptide: Protein TIFY 5 (185 aa).

The Tify domain occupies 38–72; that stretch reads AAEARRNLTIFYNGRMCAVNVTELQARTIISMASQ. A disordered region spans residues 77 to 185; it reads KQQQQQIQGR…RAAAPLYARR (109 aa). The span at 137–157 shows a compositional bias: low complexity; it reads PRAGLQAAAAAAPTMNQPPAA. A Jas motif is present at residues 155–182; sequence PAASGLSMKRSLQRFLEKRKTRAAAPLY. The Nuclear localization signal signature appears at 162 to 169; it reads MKRSLQRF.

The protein belongs to the TIFY/JAZ family. Ubiquitinated. Targeted for degradation by the SCF(COI1) E3 ubiquitin ligase-proteasome pathway during jasmonate signaling.

It localises to the nucleus. Repressor of jasmonate responses. This is Protein TIFY 5 from Oryza sativa subsp. indica (Rice).